A 278-amino-acid chain; its full sequence is Large ribosomal subunit protein uL2 (278 aa).

2 disordered regions span residues 28-58 and 223-278; these read TPEK…GGGH and GVVM…KNKR. Residues 43–53 are compositionally biased toward polar residues; the sequence is RNNQGRITTRH. Residues 268–278 are compositionally biased toward basic residues; that stretch reads IRRRKTGKNKR.

It belongs to the universal ribosomal protein uL2 family. Part of the 50S ribosomal subunit. Forms a bridge to the 30S subunit in the 70S ribosome.

In terms of biological role, one of the primary rRNA binding proteins. Required for association of the 30S and 50S subunits to form the 70S ribosome, for tRNA binding and peptide bond formation. It has been suggested to have peptidyltransferase activity; this is somewhat controversial. Makes several contacts with the 16S rRNA in the 70S ribosome. The protein is Large ribosomal subunit protein uL2 of Nocardioides sp. (strain ATCC BAA-499 / JS614).